The following is a 55-amino-acid chain: Mannose/glucose-specific lectin alpha chain (55 aa).

It belongs to the leguminous lectin family. Tetramer of two alpha and two beta chains.

In Lathyrus sativus (White vetchling), this protein is Mannose/glucose-specific lectin alpha chain.